A 385-amino-acid chain; its full sequence is Leucine aminopeptidase 1 (385 aa).

The first 20 residues, 1–20 (MKLPSLLSLGVAASTTIVAA), serve as a signal peptide directing secretion. A propeptide spanning residues 21–87 (VPDQKPIGDT…FPKTFAQTTV (67 aa)) is cleaved from the precursor. The N-linked (GlcNAc...) asparagine glycan is linked to N177. Zn(2+) is bound by residues H185, D204, E243, and D270. Residues C319 and C323 are joined by a disulfide bond. Zn(2+) is bound at residue H352.

Belongs to the peptidase M28 family. M28E subfamily. Monomer. Zn(2+) is required as a cofactor.

It localises to the secreted. Extracellular aminopeptidase that allows assimilation of proteinaceous substrates. This is Leucine aminopeptidase 1 (LAP1) from Ajellomyces capsulatus (strain NAm1 / WU24) (Darling's disease fungus).